A 268-amino-acid polypeptide reads, in one-letter code: Ubiquinone biosynthesis protein COQ4 homolog, mitochondrial (268 aa).

Zn(2+) is bound by residues His-171, Asp-172, His-175, and Glu-187.

It belongs to the COQ4 family. In terms of assembly, component of a multi-subunit COQ enzyme complex. Zn(2+) is required as a cofactor.

It localises to the mitochondrion inner membrane. The catalysed reaction is a 4-hydroxy-3-methoxy-5-(all-trans-polyprenyl)benzoate + H(+) = a 2-methoxy-6-(all-trans-polyprenyl)phenol + CO2. Its pathway is cofactor biosynthesis; ubiquinone biosynthesis. Its function is as follows. Lyase that catalyzes the C1-decarboxylation of 4-hydroxy-3-methoxy-5-(all-trans-polyprenyl)benzoic acid into 2-methoxy-6-(all-trans-polyprenyl)phenol during ubiquinone biosynthesis. This Drosophila erecta (Fruit fly) protein is Ubiquinone biosynthesis protein COQ4 homolog, mitochondrial.